Consider the following 170-residue polypeptide: Flavin reductase (NADPH) (170 aa).

It belongs to the non-flavoprotein flavin reductase family.

The catalysed reaction is reduced riboflavin + NADP(+) = riboflavin + NADPH + 2 H(+). Functionally, catalyzes the NADH-dependent reduction of FAD to provide FADH2 for the halogenase RebH. In Lentzea aerocolonigenes (Lechevalieria aerocolonigenes), this protein is Flavin reductase (NADPH) (rbmH).